The primary structure comprises 356 residues: Alternative oxidase, mitochondrial (356 aa).

The chain crosses the membrane as a helical span at residues 152–172 (VIRFIFLETVAGVPGMVGGML). Fe cation is bound by residues Glu159, Glu198, and His201. A helical transmembrane segment spans residues 217–237 (LMVLGAQGVFFNGFFISYLIS). Fe cation-binding residues include Glu249, Glu304, and His307. Residues 330–356 (YDNPEAPHPTKSAEIVKPTGWERDEVI) are disordered.

This sequence belongs to the alternative oxidase family. Requires Fe cation as cofactor.

Its subcellular location is the mitochondrion inner membrane. Its function is as follows. Catalyzes cyanide-resistant oxygen consumption. May increase respiration when the cytochrome respiratory pathway is restricted, or in response to low temperatures. The polypeptide is Alternative oxidase, mitochondrial (AOX1) (Ajellomyces capsulatus (Darling's disease fungus)).